Reading from the N-terminus, the 282-residue chain is PAK4-inhibitor INKA1 (282 aa).

Disordered regions lie at residues 21–50 and 92–127; these read RDTG…QFRA and GFSE…FSVS. 2 inka box regions span residues 163-200 and 256-282; these read EAED…ELPE and PADI…VSYL.

The protein belongs to the INKA family. In terms of assembly, interacts with PAK4. As to expression, expressed in tissues of the developing head during neurulation.

Its subcellular location is the nucleus. The protein resides in the cytoplasm. Inhibitor of the serine/threonine-protein kinase PAK4. Acts by binding PAK4 in a substrate-like manner, inhibiting the protein kinase activity. This is PAK4-inhibitor INKA1 from Mus musculus (Mouse).